The chain runs to 1649 residues: eIF-2-alpha kinase GCN2 (1649 aa).

The segment at 1–26 (MAGGRGAAGRGPAEPQESYSQRQDHE) is disordered. Residues 25 to 137 (HELQALEAIY…HHVQSFLSEH (113 aa)) form the RWD domain. Residues 146–205 (HEEMLERQAQEKQQRLLEARQKEEQEQREILHEIQKRKEEIKEEKKRKEMAKQERLEITS) adopt a coiled-coil conformation. Residues 227–260 (HGGSPDFVGNGKARAHSSGRSRRERQYSVCSGEA) form a disordered region. Ser-230 is subject to Phosphoserine. Over residues 239-249 (ARAHSSGRSRR) the composition is skewed to basic residues. Protein kinase domains are found at residues 296–539 (VYNA…HSFI) and 590–1001 (FEEL…SELL). ATP is bound by residues 596-604 (LGKGAFGAV) and Lys-619. The interval 662 to 785 (PAVPGTPPPD…CNEKDSRHEI (124 aa)) is disordered. The residue at position 667 (Thr-667) is a Phosphothreonine. Polar residues predominate over residues 705 to 721 (LSSSVEWSTSAERSNSA). Acidic residues-rich tracts occupy residues 731–740 (SSDEEDEDER) and 754–764 (SDSDIIFDNED). Asp-847 serves as the catalytic Proton acceptor. Thr-870 carries the phosphothreonine modification. A phosphothreonine; by autocatalysis mark is found at Thr-899 and Thr-904. Positions 1022–1493 (TDGKAYRTMM…DHVMQKLRTK (472 aa)) are histidyl-tRNA synthetase-like. At Lys-1259 the chain carries N6-acetyllysine.

Belongs to the protein kinase superfamily. Ser/Thr protein kinase family. GCN2 subfamily. Homodimer; homodimerization is important for kinase activation by uncharged tRNAs. Interacts with GCN1; this interaction stimulates EIF2AK4/GCN2 kinase activity and is impaired by IMPACT upon a variety of stress conditions, such as amino acid depletion, UV-C irradiation, proteasome inhibitor treatment and glucose deprivation. Interacts with DNAJC3; this interaction inhibits EIF2AK4/GCN2 kinase activity during endoplasmic reticulum (ER), hypothermic and amino acid-starving stress conditions. Interacts with MAP3K20; activates EIF2AK4/GCN2 kinase activity in response to moderate ribotoxic stress. Post-translationally, autophosphorylated; autophosphorylation on Thr-899 is increased upon amino acid starvation and in UV irradiation cells and inhibited in presence of IMPACT.

It localises to the cytoplasm. The enzyme catalyses L-seryl-[protein] + ATP = O-phospho-L-seryl-[protein] + ADP + H(+). It carries out the reaction L-threonyl-[protein] + ATP = O-phospho-L-threonyl-[protein] + ADP + H(+). Its function is as follows. Metabolic-stress sensing protein kinase that phosphorylates the alpha subunit of eukaryotic translation initiation factor 2 (EIF2S1/eIF-2-alpha) in response to low amino acid availability. Plays a role as an activator of the integrated stress response (ISR) required for adaptation to amino acid starvation. EIF2S1/eIF-2-alpha phosphorylation in response to stress converts EIF2S1/eIF-2-alpha into a global protein synthesis inhibitor, leading to a global attenuation of cap-dependent translation, and thus to a reduced overall utilization of amino acids, while concomitantly initiating the preferential translation of ISR-specific mRNAs, such as the transcriptional activator ATF4, and hence allowing ATF4-mediated reprogramming of amino acid biosynthetic gene expression to alleviate nutrient depletion. Required for the translational induction of protein kinase PRKCH following amino acid starvation. Binds uncharged tRNAs. Involved in cell cycle arrest by promoting cyclin D1 mRNA translation repression after the unfolded protein response pathway (UPR) activation or cell cycle inhibitor CDKN1A/p21 mRNA translation activation in response to amino acid deprivation. Plays a role in the consolidation of synaptic plasticity, learning as well as formation of long-term memory. Plays a role in neurite outgrowth inhibition. Plays a role in feeding behavior to maintain amino acid homeostasis; contributes to the innate aversion toward diets of imbalanced amino acid composition. Plays a proapoptotic role in response to glucose deprivation. Promotes global cellular protein synthesis repression in response to UV irradiation independently of the stress-activated protein kinase/c-Jun N-terminal kinase (SAPK/JNK) and p38 MAPK signaling pathways. Plays a role in the antiviral response against alphavirus infection; impairs early viral mRNA translation of the incoming genomic virus RNA, thus preventing alphavirus replication. The polypeptide is eIF-2-alpha kinase GCN2 (Rattus norvegicus (Rat)).